A 185-amino-acid polypeptide reads, in one-letter code: Transcription factor E (185 aa).

The HTH TFE/IIEalpha-type domain maps to 5–88 (KNKELLEIAQ…YWRLETKKLP (84 aa)).

It belongs to the TFE family. In terms of assembly, monomer. Interaction with RNA polymerase subunits RpoF and RpoE is necessary for Tfe stimulatory transcription activity. Able to interact with Tbp and RNA polymerase in the absence of DNA promoter. Interacts both with the preinitiation and elongation complexes.

Its function is as follows. Transcription factor that plays a role in the activation of archaeal genes transcribed by RNA polymerase. Facilitates transcription initiation by enhancing TATA-box recognition by TATA-box-binding protein (Tbp), and transcription factor B (Tfb) and RNA polymerase recruitment. Not absolutely required for transcription in vitro, but particularly important in cases where Tbp or Tfb function is not optimal. It dynamically alters the nucleic acid-binding properties of RNA polymerases by stabilizing the initiation complex and destabilizing elongation complexes. Seems to translocate with the RNA polymerase following initiation and acts by binding to the non template strand of the transcription bubble in elongation complexes. The sequence is that of Transcription factor E from Thermococcus kodakarensis (strain ATCC BAA-918 / JCM 12380 / KOD1) (Pyrococcus kodakaraensis (strain KOD1)).